The primary structure comprises 31 residues: M-poneritoxin-Nc3b (31 aa).

The protein belongs to the ponericin-G family. Expressed by the venom gland.

Its subcellular location is the secreted. The protein localises to the target cell membrane. Its function is as follows. Membrane-perturbating peptide with a few moderate activities. It is insecticidal, since it induces reversible paralysis in insects (L.cuprina) after 1 hour, but fails to kill them. It is also antiparasitic, since it moderately inhibits the larval development of the major pathogenic nematode of ruminants (H.contortus, IC(50)=23.2 uM) and reduces the motility of adult males of the other nematode B.malayi. It does not show antibacterial activity (MIC&gt;40 uM). It is not cytotoxic to HEK293 cells and does not induce hemolysis in human erythrocytes. It does not cause an increase in intracellular calcium concentration on neuronal and epithelial cell lines. This chain is M-poneritoxin-Nc3b, found in Neoponera commutata (Large hunting ant).